The following is a 217-amino-acid chain: Ras-related protein Rab-19 (217 aa).

Residues S26, V28, G29, K30, T31, C32, Y42, S43, E44, S45, and T49 each coordinate GTP. T31 is a binding site for Mg(2+). The Switch 1 motif lies at 39–54 (SGVYSESQQNTIGVDF). Mg(2+) contacts are provided by T49 and D72. A Switch 2 motif is present at residues 74–89 (AGQERFRTITQSYYRS). Positions 75, 130, 131, 133, 161, 162, and 163 each coordinate GTP. Residues C215 and C217 are each lipidated (S-geranylgeranyl cysteine). At C217 the chain carries Cysteine methyl ester.

It belongs to the small GTPase superfamily. Rab family. The cofactor is Mg(2+). As to expression, expressed in a tissue-specific manner. Detected at high levels in intestine, lung and spleen, and at a lower level in kidney.

It is found in the cell membrane. The catalysed reaction is GTP + H2O = GDP + phosphate + H(+). With respect to regulation, regulated by guanine nucleotide exchange factors (GEFs) which promote the exchange of bound GDP for free GTP. Regulated by GTPase activating proteins (GAPs) which increase the GTP hydrolysis activity. Inhibited by GDP dissociation inhibitors (GDIs). Functionally, the small GTPases Rab are key regulators of intracellular membrane trafficking, from the formation of transport vesicles to their fusion with membranes. Rabs cycle between an inactive GDP-bound form and an active GTP-bound form that is able to recruit to membranes different set of downstream effectors directly responsible for vesicle formation, movement, tethering and fusion. The chain is Ras-related protein Rab-19 from Mus musculus (Mouse).